Reading from the N-terminus, the 132-residue chain is Small ribosomal subunit protein uS8 (132 aa).

It belongs to the universal ribosomal protein uS8 family. As to quaternary structure, part of the 30S ribosomal subunit. Contacts proteins S5 and S12.

Functionally, one of the primary rRNA binding proteins, it binds directly to 16S rRNA central domain where it helps coordinate assembly of the platform of the 30S subunit. This Anaeromyxobacter dehalogenans (strain 2CP-C) protein is Small ribosomal subunit protein uS8.